Reading from the N-terminus, the 581-residue chain is Interleukin-22 receptor subunit alpha-1 (581 aa).

The first 15 residues, 1 to 15 (MRTLLTILAAGSLLA), serve as a signal peptide directing secretion. Topologically, residues 16–228 (HITEDTSDLL…VKTLPDRTWT (213 aa)) are extracellular. Fibronectin type-III domains follow at residues 18 to 115 (TEDT…RFSS) and 141 to 221 (PTYT…RVKT). A disulfide bond links Cys71 and Cys79. N-linked (GlcNAc...) asparagine glycosylation occurs at Asn80. The cysteines at positions 128 and 217 are disulfide-linked. The chain crosses the membrane as a helical span at residues 229 to 249 (YSFSGAFLFSLGFLVAGLCYL). At 250 to 581 (SYRYITKPPP…GLALTVQWES (332 aa)) the chain is on the cytoplasmic side. Disordered regions lie at residues 354–493 (QAAP…SSLK) and 539–563 (PSDE…LESP). Over residues 378-389 (TPQAVSETQLPS) the composition is skewed to polar residues. Ser410 and Ser414 each carry phosphoserine. The span at 440-449 (CSPTGLSLQE) shows a compositional bias: polar residues.

This sequence belongs to the type II cytokine receptor family. In terms of assembly, heterodimer with IL10RB and with IL20RB. Interacts with FBXW12; the interaction promotes ubiquitination of IL22RA1. Ubiquitinated.

It is found in the cell membrane. Its function is as follows. Component of the receptor for IL20, IL22 and IL24. Component of IL22 receptor formed by IL22RA1 and IL10RB enabling IL22 signaling via JAK/STAT pathways. IL22 also induces activation of MAPK1/MAPK3 and Akt kinases pathways. Component of one of the receptor for IL20 and IL24 formed by IL22RA1 and IL20RB also signaling through STATs activation. Mediates IL24 antiangiogenic activity as well as IL24 inhibitory effect on endothelial cell tube formation and differentiation. The polypeptide is Interleukin-22 receptor subunit alpha-1 (IL22RA1) (Bos taurus (Bovine)).